The following is a 1070-amino-acid chain: Inactive tyrosine-protein kinase 7 (1070 aa).

The N-terminal stretch at 1–30 (MGAARGSPARPRRLPLLSVLLLPLLGGTQT) is a signal peptide. Ig-like C2-type domains follow at residues 31-120 (AIVF…ASFN), 128-218 (PVVL…FTLS), 225-317 (ARVV…EATL), 309-407 (PPII…VNIT), 412-497 (PSWL…ARVQ), 503-586 (KFTP…HVQL), and 578-680 (GQIR…APLY). Residues 31–704 (AIVFIKQPSS…SPPPYKMIQT (674 aa)) are Extracellular-facing. Cys-53 and Cys-101 form a disulfide bridge. N-linked (GlcNAc...) asparagine glycans are attached at residues Asn-116, Asn-175, Asn-184, Asn-214, Asn-268, and Asn-283. The cysteines at positions 150 and 200 are disulfide-linked. 2 disulfides stabilise this stretch: Cys-246–Cys-301 and Cys-343–Cys-391. 4 N-linked (GlcNAc...) asparagine glycosylation sites follow: Asn-405, Asn-463, Asn-567, and Asn-646. Disulfide bonds link Cys-433–Cys-481, Cys-524–Cys-570, and Cys-613–Cys-664. The helical transmembrane segment at 705-725 (IGLSVGAAVAYIIAVLGLMFY) threads the bilayer. At 726-1070 (CKKRCKAKRL…LGDSTVDSKP (345 aa)) the chain is on the cytoplasmic side. Disordered regions lie at residues 736–759 (QKQPEGEEPEMECLNGGPLQNGQP) and 773–793 (GSGPAATNKRHSTSDKMHFPR). Positions 794–1070 (SSLQPITTLG…LGDSTVDSKP (277 aa)) are interaction with CTNNB1. The 271-residue stretch at 796–1066 (LQPITTLGKS…IASALGDSTV (271 aa)) folds into the Protein kinase; inactive domain. Phosphoserine is present on Ser-1064.

It belongs to the protein kinase superfamily. Tyr protein kinase family. Insulin receptor subfamily. As to quaternary structure, interacts with CTNNB1. In terms of processing, MMP14 cleaves PTK7 between Pro-621 and Leu-622 generating an N-terminal soluble (70 kDa) fragment and a membrane C-terminal (50 kDa) fragment. Proteolysis by MMP14 regulates PTK7 function in non-canonical Wnt signaling pathway. In terms of tissue distribution, highly expressed in lung, liver, pancreas, kidney, placenta and melanocytes. Weakly expressed in thyroid gland, ovary, brain, heart and skeletal muscle. Also expressed in erythroleukemia cells. But not expressed in colon.

It is found in the membrane. The protein localises to the cell junction. Its function is as follows. Inactive tyrosine kinase involved in Wnt signaling pathway. Component of both the non-canonical (also known as the Wnt/planar cell polarity signaling) and the canonical Wnt signaling pathway. Functions in cell adhesion, cell migration, cell polarity, proliferation, actin cytoskeleton reorganization and apoptosis. Has a role in embryogenesis, epithelial tissue organization and angiogenesis. This Homo sapiens (Human) protein is Inactive tyrosine-protein kinase 7 (PTK7).